The sequence spans 201 residues: MANNEVIENTWLERPSPEVAPELIGCTLVRRISEEKIIRSTIVETEAYAPGDPACHAYRKRTPRNTVMFGPPGISYVFLIYGMYHCLNVVTDIDGIPSVVLIRALQLESVPNWLWEHIPKQKSKPKVSRLAAGPGKLCRLLNIDLNLNGSRLRAGQPMWLEQRSPSFEKNLQIVQTTRIGITKGTNLLWRWYLANCDAVSK.

It belongs to the DNA glycosylase MPG family.

The sequence is that of Putative 3-methyladenine DNA glycosylase from Trichodesmium erythraeum (strain IMS101).